Here is an 87-residue protein sequence, read N- to C-terminus: Small ribosomal subunit protein bS20 (87 aa).

A compositionally biased stretch (basic residues) spans 1–27 (MANIKSAKKRALQSERRRQHNASRRSM). Positions 1–31 (MANIKSAKKRALQSERRRQHNASRRSMTRTS) are disordered.

It belongs to the bacterial ribosomal protein bS20 family.

In terms of biological role, binds directly to 16S ribosomal RNA. This is Small ribosomal subunit protein bS20 from Pseudoalteromonas atlantica (strain T6c / ATCC BAA-1087).